Consider the following 704-residue polypeptide: Elongation factor G (704 aa).

Residues 8–291 enclose the tr-type G domain; sequence DKVRNIGIMA…AVVDYLASPL (284 aa). Residues 17 to 24, 90 to 94, and 144 to 147 each bind GTP; these read AHIDAGKT, DTPGH, and NKMD.

This sequence belongs to the TRAFAC class translation factor GTPase superfamily. Classic translation factor GTPase family. EF-G/EF-2 subfamily.

The protein resides in the cytoplasm. In terms of biological role, catalyzes the GTP-dependent ribosomal translocation step during translation elongation. During this step, the ribosome changes from the pre-translocational (PRE) to the post-translocational (POST) state as the newly formed A-site-bound peptidyl-tRNA and P-site-bound deacylated tRNA move to the P and E sites, respectively. Catalyzes the coordinated movement of the two tRNA molecules, the mRNA and conformational changes in the ribosome. This is Elongation factor G from Chlorobium luteolum (strain DSM 273 / BCRC 81028 / 2530) (Pelodictyon luteolum).